We begin with the raw amino-acid sequence, 100 residues long: NADH-quinone oxidoreductase subunit K 1 (100 aa).

The next 3 membrane-spanning stretches (helical) occupy residues 3–23 (IIKAYIILSIALFLIGLLGVI), 28–48 (LITVLVSTELMLNGINLALVA), and 60–80 (IFAFFVLTVAAAEVAVGLGLI).

This sequence belongs to the complex I subunit 4L family. NDH-1 is composed of 14 different subunits. Subunits NuoA, H, J, K, L, M, N constitute the membrane sector of the complex.

It localises to the cell inner membrane. The catalysed reaction is a quinone + NADH + 5 H(+)(in) = a quinol + NAD(+) + 4 H(+)(out). Its function is as follows. NDH-1 shuttles electrons from NADH, via FMN and iron-sulfur (Fe-S) centers, to quinones in the respiratory chain. The immediate electron acceptor for the enzyme in this species is believed to be ubiquinone. Couples the redox reaction to proton translocation (for every two electrons transferred, four hydrogen ions are translocated across the cytoplasmic membrane), and thus conserves the redox energy in a proton gradient. This is NADH-quinone oxidoreductase subunit K 1 from Aquifex aeolicus (strain VF5).